Consider the following 320-residue polypeptide: NAD-dependent protein deacylase SIR2rp2 (320 aa).

A mitochondrion-targeting transit peptide spans 1–22 (MRPAGTLASFLERCSARKRGRG). A Deacetylase sirtuin-type domain is found at 23-320 (CVVLTGAGCS…MFFRRKTIQL (298 aa)). Residues 28–48 (GAGC…GQYH) and 108–111 (QNVD) contribute to the NAD(+) site. His144 serves as the catalytic Proton acceptor. Residues Cys152, Cys155, Cys207, and Cys210 each contribute to the Zn(2+) site. Residues 248 to 250 (GTS), 274 to 276 (NAG), and Gly294 each bind NAD(+).

It belongs to the sirtuin family. Class II subfamily. Zn(2+) serves as cofactor.

The protein localises to the mitochondrion matrix. It carries out the reaction N(6)-acetyl-L-lysyl-[protein] + NAD(+) + H2O = 2''-O-acetyl-ADP-D-ribose + nicotinamide + L-lysyl-[protein]. NAD-dependent protein deacylase. Catalyzes the NAD-dependent hydrolysis of acyl groups from lysine residues. This chain is NAD-dependent protein deacylase SIR2rp2 (SIR2rp2), found in Leishmania major.